Reading from the N-terminus, the 156-residue chain is 2-C-methyl-D-erythritol 2,4-cyclodiphosphate synthase (156 aa).

Residues Asp10 and His12 each coordinate a divalent metal cation. 4-CDP-2-C-methyl-D-erythritol 2-phosphate is bound by residues 10-12 and 36-37; these read DSH and HS. A divalent metal cation is bound at residue His44. 4-CDP-2-C-methyl-D-erythritol 2-phosphate contacts are provided by residues 58–60 and 63–67; these read DIG and FKDTD.

It belongs to the IspF family. As to quaternary structure, homotrimer. Requires a divalent metal cation as cofactor.

It catalyses the reaction 4-CDP-2-C-methyl-D-erythritol 2-phosphate = 2-C-methyl-D-erythritol 2,4-cyclic diphosphate + CMP. It functions in the pathway isoprenoid biosynthesis; isopentenyl diphosphate biosynthesis via DXP pathway; isopentenyl diphosphate from 1-deoxy-D-xylulose 5-phosphate: step 4/6. In terms of biological role, involved in the biosynthesis of isopentenyl diphosphate (IPP) and dimethylallyl diphosphate (DMAPP), two major building blocks of isoprenoid compounds. Catalyzes the conversion of 4-diphosphocytidyl-2-C-methyl-D-erythritol 2-phosphate (CDP-ME2P) to 2-C-methyl-D-erythritol 2,4-cyclodiphosphate (ME-CPP) with a corresponding release of cytidine 5-monophosphate (CMP). This Aquifex aeolicus (strain VF5) protein is 2-C-methyl-D-erythritol 2,4-cyclodiphosphate synthase.